An 862-amino-acid chain; its full sequence is Rab GTPase-binding effector protein 1 (862 aa).

Ala-2 is modified (N-acetylalanine). The stretch at 11–345 (DVSLQQRVAE…KKTDTEEEVK (335 aa)) forms a coiled coil. Position 282 is an N6-acetyllysine (Lys-282). Positions 315 to 374 (ELKKKDQEEDEQQRVNKRKDNKKTDTEEEVKIPVVCALTQEESSTPLSNEEEHLDSTHGS) are disordered. Over residues 336–345 (KKTDTEEEVK) the composition is skewed to basic and acidic residues. Ser-374, Ser-377, and Ser-407 each carry phosphoserine. Phosphothreonine is present on Thr-408. Ser-410 carries the phosphoserine modification. Positions 534–816 (DMCSNYEKQL…LQTELDVSEQ (283 aa)) form a coiled coil.

The protein belongs to the rabaptin family. Heterodimer with RABGEF1. The heterodimer binds RAB4A and RAB5A that have been activated by GTP-binding. Interacts with TSC2. Interacts with GGA1 (via GAE domain), GGA2 (via GAE domain) and GGA3 (via GAE domain). Interacts with AP1G1 (via GAE domain). Interacts with AP1G2 (via GAE domain). Interacts with ECPAS. Interacts with KCNH1. Interacts with PKD1 (via C-terminal domain) and GGA1; the interactions recruit PKD1:PKD2 complex to GGA1 and ARL3 at trans-Golgi network. Interacts with KCNH1. Post-translationally, proteolytic cleavage by caspases in apoptotic cells causes loss of endosome fusion activity.

It localises to the cytoplasm. The protein resides in the early endosome. It is found in the recycling endosome. Its subcellular location is the cytoplasmic vesicle. Its function is as follows. Rab effector protein acting as linker between gamma-adaptin, RAB4A and RAB5A. Involved in endocytic membrane fusion and membrane trafficking of recycling endosomes. Involved in KCNH1 channels trafficking to and from the cell membrane. Stimulates RABGEF1 mediated nucleotide exchange on RAB5A. Mediates the traffic of PKD1:PKD2 complex from the endoplasmic reticulum through the Golgi to the cilium. The sequence is that of Rab GTPase-binding effector protein 1 (Rabep1) from Mus musculus (Mouse).